The following is a 631-amino-acid chain: MEVHKVVAPPHKSTVAKLKTKLKETFFPDDPLRQFRGQPNRTKLIRAAQYIFPILQWCPEYSFSLLKSDVVSGLTIASLAIPQGISYAKLANLPPIVGLYSSFVPPLVYAVLGSSRDLAVGPVSIASLILGSMLRQQVSPVDDPVLFLQLAFSSTFFAGLFQASLGILRLGFIIDFLSKATLIGFMGGAAIIVSLQQLKGLLGITHFTKHMSVVPVLSSVFQHTNEWSWQTIVMGVCFLLFLLSTRHLSMKKPKLFWVSAGAPLLSVIVSTLLVFVFRAERHGISVIGKLPEGLNPPSWNMLQFHGSHLALVAKTGLVTGIVSLTEGIAVGRTFAALKNYHVDGNKEMIAIGLMNVVGSATSCYVTTGAFSRSAVNNNAGAKTAVSNIVMSVTVMVTLLFLMPLFEYTPNVVLGAIIVTAVIGLIDLPAACHIWKIDKFDFLVMLCAFFGVIFLSVQNGLAIAVGLSLFKILMQVTRPKMVIMGNIPGTDIYRDLHHYKEAQRIPGFLVLSIESPVNFANSNYLTERTSRWIEECEEEEAQEKHSSLQFLILEMSAVSGVDTNGVSFFKELKKTTAKKDIELVFVNPLSEVVEKLQRADEQKEFMRPEFLFLTVAEAVASLSLKGPSLSNV.

The Cytoplasmic segment spans residues 1 to 69 (MEVHKVVAPP…EYSFSLLKSD (69 aa)). The helical transmembrane segment at 70 to 90 (VVSGLTIASLAIPQGISYAKL) threads the bilayer. Residues 91-92 (AN) are Extracellular-facing. A helical transmembrane segment spans residues 93–113 (LPPIVGLYSSFVPPLVYAVLG). Over 114-117 (SSRD) the chain is Cytoplasmic. Residues 118-138 (LAVGPVSIASLILGSMLRQQV) traverse the membrane as a helical segment. Residues 139–144 (SPVDDP) are Extracellular-facing. A helical membrane pass occupies residues 145 to 165 (VLFLQLAFSSTFFAGLFQASL). At 166-171 (GILRLG) the chain is on the cytoplasmic side. Residues 172–192 (FIIDFLSKATLIGFMGGAAII) form a helical membrane-spanning segment. At 193–223 (VSLQQLKGLLGITHFTKHMSVVPVLSSVFQH) the chain is on the extracellular side. The chain crosses the membrane as a helical span at residues 224 to 244 (TNEWSWQTIVMGVCFLLFLLS). Residues 245 to 256 (TRHLSMKKPKLF) are Cytoplasmic-facing. A helical membrane pass occupies residues 257–277 (WVSAGAPLLSVIVSTLLVFVF). The Extracellular segment spans residues 278 to 309 (RAERHGISVIGKLPEGLNPPSWNMLQFHGSHL). Residues 310 to 330 (ALVAKTGLVTGIVSLTEGIAV) form a helical membrane-spanning segment. The Cytoplasmic portion of the chain corresponds to 331 to 347 (GRTFAALKNYHVDGNKE). Residues 348–368 (MIAIGLMNVVGSATSCYVTTG) traverse the membrane as a helical segment. Over 369 to 384 (AFSRSAVNNNAGAKTA) the chain is Extracellular. A helical transmembrane segment spans residues 385–405 (VSNIVMSVTVMVTLLFLMPLF). At 406-410 (EYTPN) the chain is on the cytoplasmic side. Residues 411 to 431 (VVLGAIIVTAVIGLIDLPAAC) traverse the membrane as a helical segment. Residues 432 to 441 (HIWKIDKFDF) are Extracellular-facing. Residues 442-462 (LVMLCAFFGVIFLSVQNGLAI) form a helical membrane-spanning segment. The Cytoplasmic portion of the chain corresponds to 463–631 (AVGLSLFKIL…SLKGPSLSNV (169 aa)). The 125-residue stretch at 497–621 (HYKEAQRIPG…LTVAEAVASL (125 aa)) folds into the STAS domain.

It belongs to the SLC26A/SulP transporter (TC 2.A.53) family. In terms of tissue distribution, expressed only in leaves.

It is found in the membrane. In terms of biological role, h(+)/sulfate cotransporter that may play a role in the regulation of sulfate assimilation. The chain is Probable sulfate transporter 3.3 (SULTR3;3) from Arabidopsis thaliana (Mouse-ear cress).